A 280-amino-acid polypeptide reads, in one-letter code: F420-dependent methylenetetrahydromethanopterin dehydrogenase (280 aa).

This sequence belongs to the MTD family.

It catalyses the reaction 5,10-methylenetetrahydromethanopterin + oxidized coenzyme F420-(gamma-L-Glu)(n) + 2 H(+) = 5,10-methenyl-5,6,7,8-tetrahydromethanopterin + reduced coenzyme F420-(gamma-L-Glu)(n). Its pathway is one-carbon metabolism; methanogenesis from CO(2); 5,10-methylene-5,6,7,8-tetrahydromethanopterin from 5,10-methenyl-5,6,7,8-tetrahydromethanopterin (coenzyme F420 route): step 1/1. Its function is as follows. Catalyzes the reversible reduction of methenyl-H(4)MPT(+) to methylene-H(4)MPT. In Methanosphaerula palustris (strain ATCC BAA-1556 / DSM 19958 / E1-9c), this protein is F420-dependent methylenetetrahydromethanopterin dehydrogenase.